The primary structure comprises 508 residues: 2-isopropylmalate synthase (508 aa).

The region spanning 5 to 267 (IKIFDTTLRD…THRIDTTQIY (263 aa)) is the Pyruvate carboxyltransferase domain. Asp-14, His-202, His-204, and Asn-238 together coordinate Mn(2+). The interval 390 to 508 (VIDSFQINSG…SEIGESIISQ (119 aa)) is regulatory domain.

The protein belongs to the alpha-IPM synthase/homocitrate synthase family. LeuA type 1 subfamily. Homodimer. Mn(2+) is required as a cofactor.

It localises to the cytoplasm. The enzyme catalyses 3-methyl-2-oxobutanoate + acetyl-CoA + H2O = (2S)-2-isopropylmalate + CoA + H(+). It functions in the pathway amino-acid biosynthesis; L-leucine biosynthesis; L-leucine from 3-methyl-2-oxobutanoate: step 1/4. Catalyzes the condensation of the acetyl group of acetyl-CoA with 3-methyl-2-oxobutanoate (2-ketoisovalerate) to form 3-carboxy-3-hydroxy-4-methylpentanoate (2-isopropylmalate). This Ruminiclostridium cellulolyticum (strain ATCC 35319 / DSM 5812 / JCM 6584 / H10) (Clostridium cellulolyticum) protein is 2-isopropylmalate synthase.